The following is a 1002-amino-acid chain: Calcium-transporting ATPase sarcoplasmic/endoplasmic reticulum type (1002 aa).

Residues 1-48 (MEDGHSKTVEQSLNFFGTDGERGLTLDQIKTNQAKYGPNELPTEEGKS) are Cytoplasmic-facing. The chain crosses the membrane as a helical span at residues 49-69 (IWQLVLEQFDDLLVKILLLAA). At 70–89 (IISFVLALFEEHEETFTAFV) the chain is on the lumenal side. A helical membrane pass occupies residues 90–110 (EPLVILLILIANAVVGVWQER). Residues 111–253 (NAESAIEALK…EIKTPLQQKL (143 aa)) lie on the Cytoplasmic side of the membrane. A helical transmembrane segment spans residues 254–273 (DEFGEQLSKVISVICVAVWA). At 274–295 (INIGHFNDPAHGGSWIKGAIYY) the chain is on the lumenal side. The chain crosses the membrane as a helical span at residues 296-313 (FKIAVALAVAAIPEGLPA). Residues Val304, Ala305, Ile307, and Glu309 each coordinate Ca(2+). Residues 314 to 757 (VITTCLALGT…EEGRAIYNNM (444 aa)) are Cytoplasmic-facing. The 4-aspartylphosphate intermediate role is filled by Asp351. The Mg(2+) site is built by Asp703 and Asp707. Residues 758–777 (KQFIRYLISSNIGEVVSIFL) traverse the membrane as a helical segment. Positions 768 and 771 each coordinate Ca(2+). Topologically, residues 778–787 (TAALGLPEAL) are lumenal. The helical transmembrane segment at 788–808 (IPVQLLWVNLVTDGLPATALG) threads the bilayer. Ca(2+) contacts are provided by Asn796, Thr799, and Asp800. The Cytoplasmic segment spans residues 809-828 (FNPPDLDIMDKPPRKADEGL). Residues 829–851 (ISGWLFFRYMAIGFYVGAATVGA) traverse the membrane as a helical segment. Over 852-897 (AAWWFIASSEGPGLTYWQLTHHLSCLGGGDEFKGVDCKIFSDPKAM) the chain is Lumenal. Residues 898–917 (TMALSVLVTIEMLNAMNSLS) form a helical membrane-spanning segment. Glu908 contacts Ca(2+). Residues 918 to 930 (ENQSLISMPPWCN) are Cytoplasmic-facing. Residues 931–949 (LWLIGSMALSFTLHFVILY) traverse the membrane as a helical segment. Residues 950 to 964 (VDVLSTVFQVTPLSA) are Lumenal-facing. The helical transmembrane segment at 965 to 985 (EEWITVMKFSIPVVLLDETLK) threads the bilayer. At 986–1002 (FVARKIADVPDAVVDKW) the chain is on the cytoplasmic side.

This sequence belongs to the cation transport ATPase (P-type) (TC 3.A.3) family.

The protein resides in the endoplasmic reticulum membrane. Its subcellular location is the sarcoplasmic reticulum membrane. The catalysed reaction is Ca(2+)(in) + ATP + H2O = Ca(2+)(out) + ADP + phosphate + H(+). Functionally, this magnesium-dependent enzyme catalyzes the hydrolysis of ATP coupled with the transport of calcium. The chain is Calcium-transporting ATPase sarcoplasmic/endoplasmic reticulum type from Drosophila pseudoobscura pseudoobscura (Fruit fly).